We begin with the raw amino-acid sequence, 227 residues long: SPbeta prophage-derived uncharacterized membrane protein YomJ (227 aa).

A run of 2 helical transmembrane segments spans residues L16–L36 and G131–A151.

It is found in the cell membrane. This chain is SPbeta prophage-derived uncharacterized membrane protein YomJ (yomJ), found in Bacillus subtilis (strain 168).